We begin with the raw amino-acid sequence, 158 residues long: NAD(P)H-quinone oxidoreductase subunit J, chloroplastic (158 aa).

The protein belongs to the complex I 30 kDa subunit family. NDH is composed of at least 16 different subunits, 5 of which are encoded in the nucleus.

It localises to the plastid. It is found in the chloroplast thylakoid membrane. The enzyme catalyses a plastoquinone + NADH + (n+1) H(+)(in) = a plastoquinol + NAD(+) + n H(+)(out). The catalysed reaction is a plastoquinone + NADPH + (n+1) H(+)(in) = a plastoquinol + NADP(+) + n H(+)(out). NDH shuttles electrons from NAD(P)H:plastoquinone, via FMN and iron-sulfur (Fe-S) centers, to quinones in the photosynthetic chain and possibly in a chloroplast respiratory chain. The immediate electron acceptor for the enzyme in this species is believed to be plastoquinone. Couples the redox reaction to proton translocation, and thus conserves the redox energy in a proton gradient. This is NAD(P)H-quinone oxidoreductase subunit J, chloroplastic from Liriodendron tulipifera (Tuliptree).